The primary structure comprises 895 residues: Probable aminodeoxychorismate synthase, chloroplastic (895 aa).

The interval 1–45 (MAALRLPTPPPPRAPAPWLHSSHRRRVAAPRGAGGGGGGGGAVPP) is disordered. The N-terminal 48 residues, 1-48 (MAALRLPTPPPPRAPAPWLHSSHRRRVAAPRGAGGGGGGGGAVPPPPV), are a transit peptide targeting the chloroplast. Over residues 32-42 (GAGGGGGGGGA) the composition is skewed to gly residues. In terms of domain architecture, Glutamine amidotransferase type-1 spans 49–307 (RTLLIDNYDS…KKITTDFGLQ (259 aa)). Residue Cys-135 is the Nucleophile of the active site. Active-site residues include His-281 and Glu-283. The interval 387–875 (IFSVLFGHHS…KAKAPTKVVE (489 aa)) is PABB component.

The protein in the C-terminal section; belongs to the anthranilate synthase component I family.

It localises to the plastid. The protein resides in the chloroplast. The enzyme catalyses chorismate + L-glutamine = 4-amino-4-deoxychorismate + L-glutamate. The protein operates within cofactor biosynthesis; tetrahydrofolate biosynthesis; 4-aminobenzoate from chorismate: step 1/2. Its pathway is antibiotic biosynthesis; candicidin biosynthesis. Functionally, bifunctional enzyme that catalyzes the biosynthesis of 4-amino-4-deoxychorismate (ADC) from chorismate and glutamine. In the first step, a glutamine amidotransferase generates ammonia that is channelled between the binding sites of glutamine and chorismate and used along with chorismate in the second step, catalyzed by aminodeoxychorismate synthase, to produce ADC. Required for the synthesis of 4-aminobenzoate (PABA), an important component in tetrahydrofolate biosynthesis. Does not possess ADC lyase activity. This is Probable aminodeoxychorismate synthase, chloroplastic (ADCS) from Oryza sativa subsp. japonica (Rice).